Here is a 178-residue protein sequence, read N- to C-terminus: ATP-dependent protease subunit HslV (178 aa).

Threonine 7 is an active-site residue. 3 residues coordinate Na(+): glycine 162, cysteine 165, and threonine 168.

It belongs to the peptidase T1B family. HslV subfamily. A double ring-shaped homohexamer of HslV is capped on each side by a ring-shaped HslU homohexamer. The assembly of the HslU/HslV complex is dependent on binding of ATP.

Its subcellular location is the cytoplasm. It carries out the reaction ATP-dependent cleavage of peptide bonds with broad specificity.. With respect to regulation, allosterically activated by HslU binding. Protease subunit of a proteasome-like degradation complex believed to be a general protein degrading machinery. In Cupriavidus necator (strain ATCC 17699 / DSM 428 / KCTC 22496 / NCIMB 10442 / H16 / Stanier 337) (Ralstonia eutropha), this protein is ATP-dependent protease subunit HslV.